Here is a 201-residue protein sequence, read N- to C-terminus: Two-component response regulator ORR10 (201 aa).

Positions 10–142 constitute a Response regulatory domain; sequence HVLAVDDSLP…DMSKLKPHIL (133 aa). Asp-75 carries the post-translational modification 4-aspartylphosphate. Residues 149 to 201 are disordered; it reads HYQQEQHLQSNSESNNSSNPTSENSSSSTSTNSHKRKAVDEEILPHTIRPRHS. Positions 158-180 are enriched in low complexity; it reads SNSESNNSSNPTSENSSSSTSTN.

It belongs to the ARR family. Type-A subfamily. Two-component system major event consists of a His-to-Asp phosphorelay between a sensor histidine kinase (HK) and a response regulator (RR). In plants, the His-to-Asp phosphorelay involves an additional intermediate named Histidine-containing phosphotransfer protein (HPt). This multistep phosphorelay consists of a His-Asp-His-Asp sequential transfer of a phosphate group between first a His and an Asp of the HK protein, followed by the transfer to a conserved His of the HPt protein and finally the transfer to an Asp in the receiver domain of the RR protein. In terms of tissue distribution, expressed in mature leaves, and at low levels in roots, shoots and flowers.

Functionally, functions as a response regulator involved in His-to-Asp phosphorelay signal transduction system. Phosphorylation of the Asp residue in the receiver domain activates the ability of the protein to promote the transcription of target genes. Type-A response regulators seem to act as negative regulators of the cytokinin signaling. This chain is Two-component response regulator ORR10, found in Oryza sativa subsp. indica (Rice).